A 160-amino-acid chain; its full sequence is Ureidoglycolate lyase (160 aa).

It belongs to the ureidoglycolate lyase family. In terms of assembly, homodimer. The cofactor is Ni(2+).

It catalyses the reaction (S)-ureidoglycolate = urea + glyoxylate. Its pathway is nitrogen metabolism; (S)-allantoin degradation. Its function is as follows. Catalyzes the catabolism of the allantoin degradation intermediate (S)-ureidoglycolate, generating urea and glyoxylate. Involved in the utilization of allantoin as nitrogen source. This Salmonella typhimurium (strain LT2 / SGSC1412 / ATCC 700720) protein is Ureidoglycolate lyase.